Consider the following 66-residue polypeptide: Disintegrin EO5B (66 aa).

Positions 1–65 constitute a Disintegrin domain; that stretch reads NSAHPCCDPV…DCPRNPYKGK (65 aa). 4 disulfide bridges follow: C6-C29, C20-C26, C25-C50, and C38-C57. Residues 42 to 44 carry the Cell attachment site; atypical (VGD) motif; that stretch reads VGD.

It belongs to the disintegrin family. Dimeric disintegrin subfamily. In terms of assembly, heterodimer with EO4A or EO5A; disulfide-linked. In terms of tissue distribution, expressed by the venom gland.

The protein resides in the secreted. Functionally, poor inhibitor of platelet aggregation. When it dimerizes with EO4A, it inhibits the adhesion of cells expressing the RGD-dependent integrin alpha-5/beta-1 (ITGA5/ITGB1) to immobilized fibronectin. When it dimerizes with EO5A, it inhibits the adhesion of the alpha-4/beta-1 (ITGA4/ITGB1) integrin to VCAM-1. When it dimerizes either with EO4A or EO5A, the inhibition on alpha-IIb/beta-3 (ITGA2B/ITGB3) is low. The polypeptide is Disintegrin EO5B (Echis ocellatus (Ocellated saw-scaled viper)).